The following is a 223-amino-acid chain: Uracil-DNA glycosylase (223 aa).

The active-site Proton acceptor is Asp64.

It belongs to the uracil-DNA glycosylase (UDG) superfamily. UNG family.

The protein resides in the cytoplasm. It carries out the reaction Hydrolyzes single-stranded DNA or mismatched double-stranded DNA and polynucleotides, releasing free uracil.. Excises uracil residues from the DNA which can arise as a result of misincorporation of dUMP residues by DNA polymerase or due to deamination of cytosine. In Desulfitobacterium hafniense (strain DSM 10664 / DCB-2), this protein is Uracil-DNA glycosylase.